The following is a 407-amino-acid chain: Large ribosomal subunit protein uL3-like (407 aa).

Basic residues predominate over residues 1-31; the sequence is MSHRKFSAPRHGHLGFLPHKRSHRHRGKVKT. Disordered stretches follow at residues 1-35 and 383-407; these read MSHRKFSAPRHGHLGFLPHKRSHRHRGKVKTWPRD and QEKRAFMGPQKKHLEKEKPETSGDL. Positions 394–407 are enriched in basic and acidic residues; that stretch reads KHLEKEKPETSGDL.

Belongs to the universal ribosomal protein uL3 family. In terms of assembly, component of the large ribosomal subunit in striated muscle cells.

Heart- and skeletal muscle-specific component of the ribosome, which regulates muscle function. Component of the large ribosomal subunit in striated muscle cells: replaces the RPL3 paralog in the ribosome in these cells. The ribosome is a large ribonucleoprotein complex responsible for the synthesis of proteins in the cell. Inhibits myotube growth and muscle function. This Bos taurus (Bovine) protein is Large ribosomal subunit protein uL3-like (RPL3L).